The following is a 259-amino-acid chain: MAVGKNKRLSKGKKGIKKKVVDPFTRKEWYDIKAPSFFENRNAGKTLVNRTQGLKNANDSLKGRVLELSLADLNNDQEQSFRKIKLRVEDVAGKSCLTSFYGMDFTTDKLRSIVRKWQSLVEAHVDVKTTDGYVLRLFAIGFTKRQSNQVKKTTYAQSSQLKEIRAKMVEIMRREAEGSDLKELVQKFVPESIGREIEKAAKGIYPLHNVYVRKAKIVKTPKIDMSKLLESHGEAMDANTGSKVVKSGEFVEPEILESV.

Ala-2 carries the post-translational modification N-acetylalanine; partial.

This sequence belongs to the eukaryotic ribosomal protein eS1 family. As to quaternary structure, component of the small ribosomal subunit. Mature ribosomes consist of a small (40S) and a large (60S) subunit. The 40S subunit contains about 33 different proteins and 1 molecule of RNA (18S). The 60S subunit contains about 49 different proteins and 3 molecules of RNA (25S, 5.8S and 5S).

The protein localises to the cytoplasm. The sequence is that of Small ribosomal subunit protein eS1 from Cryptococcus neoformans var. neoformans serotype D (strain B-3501A) (Filobasidiella neoformans).